Reading from the N-terminus, the 169-residue chain is Eukaryotic translation initiation factor 5A-2 (169 aa).

Hypusine is present on lysine 64.

Belongs to the eIF-5A family. Lys-51 undergoes hypusination, a unique post-translational modification that consists in the addition of a butylamino group from spermidine to lysine side chain, leading to the formation of the unusual amino acid hypusine. eIF-5As are the only known proteins to undergo this modification, which is essential for their function.

It localises to the cytoplasm. Its subcellular location is the nucleus. In terms of biological role, translation factor that promotes translation elongation and termination, particularly upon ribosome stalling at specific amino acid sequence contexts. Binds between the exit (E) and peptidyl (P) site of the ribosome and promotes rescue of stalled ribosome: specifically required for efficient translation of polyproline-containing peptides as well as other motifs that stall the ribosome. Acts as a ribosome quality control (RQC) cofactor by joining the RQC complex to facilitate peptidyl transfer during CAT tailing step. The chain is Eukaryotic translation initiation factor 5A-2 (tif51b) from Schizosaccharomyces pombe (strain 972 / ATCC 24843) (Fission yeast).